Consider the following 181-residue polypeptide: K99 fimbrial protein (181 aa).

The signal sequence occupies residues 1 to 22 (MKKTLLAIILGGMAFATTNASA). The cysteines at positions 38 and 79 are disulfide-linked.

It belongs to the fimbrial protein family.

It localises to the fimbrium. Fimbriae (also called pili), polar filaments radiating from the surface of the bacterium to a length of 0.5-1.5 micrometers and numbering 100-300 per cell, enable bacteria to colonize the epithelium of specific host organs. Its function is as follows. FanC is the main component of the K99 fimbriae. The protein is K99 fimbrial protein (fanC) of Escherichia coli.